A 539-amino-acid polypeptide reads, in one-letter code: Chaperonin GroEL (539 aa).

ATP contacts are provided by residues 30 to 33 (TLGP), 87 to 91 (DGTTT), Gly-414, 479 to 481 (DAL), and Asp-495.

It belongs to the chaperonin (HSP60) family. As to quaternary structure, forms a cylinder of 14 subunits composed of two heptameric rings stacked back-to-back. Interacts with the co-chaperonin GroES.

Its subcellular location is the cytoplasm. It catalyses the reaction ATP + H2O + a folded polypeptide = ADP + phosphate + an unfolded polypeptide.. Together with its co-chaperonin GroES, plays an essential role in assisting protein folding. The GroEL-GroES system forms a nano-cage that allows encapsulation of the non-native substrate proteins and provides a physical environment optimized to promote and accelerate protein folding. This chain is Chaperonin GroEL, found in Caldicellulosiruptor saccharolyticus (strain ATCC 43494 / DSM 8903 / Tp8T 6331).